The primary structure comprises 80 residues: Defensin-like protein 18 (80 aa).

An N-terminal signal peptide occupies residues 1-29; that stretch reads MAKFCTTITLILVALVLFADFEAPTIVKA. Disulfide bonds link Cys-32–Cys-80, Cys-43–Cys-64, Cys-49–Cys-74, and Cys-53–Cys-76.

It belongs to the DEFL family.

Its subcellular location is the secreted. Confers broad-spectrum resistance to pathogens. The protein is Defensin-like protein 18 (PDF1.5) of Arabidopsis thaliana (Mouse-ear cress).